The chain runs to 382 residues: MRGRQKIAIVGAGLGGAAAATLLQQAGFDVEVFEQAPAFTRLGAGIHIGPNVMKIFRRMGLEQKLELMGSHPDFWFSRDGNTGDYLSRIPLGEFARREYGAAYITIHRGDLHALQIEAIQPGTVHFGKRLEKIVDEGDQVRLDFADGTHTVADIVIGADGIHSKIREELLGAEAPIYSGWVAHRALIRGVNLAQHADVFEPCVKWWSEDRHMMVYYTTGKRDEYYFVTGVPHEAWDFQGAFVDSSQEEMRAAFEGYHPTVQKLIDATESITKWPLRNRNPLPLWSRGRLVLLGDACHPMKPHMAQGACMAIEDAAMLTRCLQETGLSDHRTAFALYEANRKERASQVQSVSNANTWLYSQEDPAWVYGYDLYGQQLESGEAA.

A signal peptide spans 1–25; the sequence is MRGRQKIAIVGAGLGGAAAATLLQQ. FAD-binding positions include Gly15, 34 to 35, His47, Arg108, and Leu130; that span reads EQ. His47 (proton acceptor) is an active-site residue. Tyr215 (proton acceptor) is an active-site residue. Residues Asp294 and 307–308 contribute to the FAD site; that span reads AC.

This sequence belongs to the 6-hydroxynicotinate 3-monooxygenase family. As to quaternary structure, monomer. FAD serves as cofactor.

The enzyme catalyses 6-hydroxynicotinate + NADH + O2 + 2 H(+) = 2,5-dihydroxypyridine + CO2 + NAD(+) + H2O. Its pathway is cofactor degradation; nicotinate degradation. Functionally, flavin-dependent monooxygenase (FMO) that catalyzes the decarboxylative hydroxylation of 6-hydroxynicotinic acid (6-HNA) to 2,5-dihydroxypyridine (2,5-DHP) with concomitant oxidation of NADH, a step in the aerobic nicotinate degradation pathway. The polypeptide is 6-hydroxynicotinate 3-monooxygenase (Pseudomonas putida (strain ATCC 47054 / DSM 6125 / CFBP 8728 / NCIMB 11950 / KT2440)).